The chain runs to 756 residues: MTPAHGTQPGMLPGHEFEALLGARHHDPFAVLGPHPDGDGTLVRACLPGAASVQLTDAGGTPLAEMARLHGGGVFAARLPREYKGGAPDYRLRVQWSDGSGQCGADPYAFGLLLGELDLHLIAEGRHFELGACLGAQWQRVDGIDGVRFAVWAPNARRVSVIADFNGWHPARHPMRLRHPSGIWELFIPAALGAQPGSRYKYDLLDPHGTELPDKADPLALATEAPPATASVVAGPGQGAPPFAWHDADWMARRGGADPYAAPMSVYEVHALSWLRAANDTQRGWEILAERLVPYVQELGFTHIELLPITEHPFGGSWGYQPLSLYAPTARLGPPQAFAAFIDRCHQAGIGVLLDWVPAHFPTDPHGLARFDGTALYEHEDPREGFHQDWNTLIYNLGRNEVRGFLLAGALHWLEHFHADGLRVDAVASMLYRDYSREPGQWVPNRFGGRENLEAIDFLRELNAVVHERCPGALTIAEESTAWPGVTASVASGGLGFDFKWNMGWMHDTLHYLGHEPVHRAWHHQDMTFGLVYAWSEAFVLPLSHDEVVHGKASMIGKVPGDEWQRFAGLRAYYGFMWAHPGKKLLFMGGELAQWQEWNHDAELDWALLDHPMHRGMHTLVRDLNRLYRELPALHALDHRPEGFQWVVGDDNHNSVFAWLRRAGPYSREVVLVVVNMTPVPRYGYRLGVPYAGAWQECLNTDAAVYGGTNVGNSGAVAAVDVPSHGQPASLALTLPPLATLVLRFDPGGGIQGAST.

Catalysis depends on Asp425, which acts as the Nucleophile. Glu478 serves as the catalytic Proton donor.

Belongs to the glycosyl hydrolase 13 family. GlgB subfamily. In terms of assembly, monomer.

It catalyses the reaction Transfers a segment of a (1-&gt;4)-alpha-D-glucan chain to a primary hydroxy group in a similar glucan chain.. It functions in the pathway glycan biosynthesis; glycogen biosynthesis. Its function is as follows. Catalyzes the formation of the alpha-1,6-glucosidic linkages in glycogen by scission of a 1,4-alpha-linked oligosaccharide from growing alpha-1,4-glucan chains and the subsequent attachment of the oligosaccharide to the alpha-1,6 position. In Cupriavidus necator (strain ATCC 17699 / DSM 428 / KCTC 22496 / NCIMB 10442 / H16 / Stanier 337) (Ralstonia eutropha), this protein is 1,4-alpha-glucan branching enzyme GlgB.